A 208-amino-acid chain; its full sequence is Imidazole glycerol phosphate synthase subunit HisH (208 aa).

The Glutamine amidotransferase type-1 domain maps to 1-206 (MIVIIDYDTG…KEVTESCKSS (206 aa)). The active-site Nucleophile is Cys-79. Residues His-181 and Glu-183 contribute to the active site.

In terms of assembly, heterodimer of HisH and HisF.

The protein localises to the cytoplasm. The catalysed reaction is 5-[(5-phospho-1-deoxy-D-ribulos-1-ylimino)methylamino]-1-(5-phospho-beta-D-ribosyl)imidazole-4-carboxamide + L-glutamine = D-erythro-1-(imidazol-4-yl)glycerol 3-phosphate + 5-amino-1-(5-phospho-beta-D-ribosyl)imidazole-4-carboxamide + L-glutamate + H(+). It carries out the reaction L-glutamine + H2O = L-glutamate + NH4(+). It participates in amino-acid biosynthesis; L-histidine biosynthesis; L-histidine from 5-phospho-alpha-D-ribose 1-diphosphate: step 5/9. IGPS catalyzes the conversion of PRFAR and glutamine to IGP, AICAR and glutamate. The HisH subunit catalyzes the hydrolysis of glutamine to glutamate and ammonia as part of the synthesis of IGP and AICAR. The resulting ammonia molecule is channeled to the active site of HisF. This is Imidazole glycerol phosphate synthase subunit HisH from Listeria innocua serovar 6a (strain ATCC BAA-680 / CLIP 11262).